Consider the following 255-residue polypeptide: 1-(5-phosphoribosyl)-5-[(5-phosphoribosylamino)methylideneamino] imidazole-4-carboxamide isomerase (255 aa).

D8 serves as the catalytic Proton acceptor. D129 serves as the catalytic Proton donor.

It belongs to the HisA/HisF family.

The protein resides in the cytoplasm. It catalyses the reaction 1-(5-phospho-beta-D-ribosyl)-5-[(5-phospho-beta-D-ribosylamino)methylideneamino]imidazole-4-carboxamide = 5-[(5-phospho-1-deoxy-D-ribulos-1-ylimino)methylamino]-1-(5-phospho-beta-D-ribosyl)imidazole-4-carboxamide. It functions in the pathway amino-acid biosynthesis; L-histidine biosynthesis; L-histidine from 5-phospho-alpha-D-ribose 1-diphosphate: step 4/9. This Gloeobacter violaceus (strain ATCC 29082 / PCC 7421) protein is 1-(5-phosphoribosyl)-5-[(5-phosphoribosylamino)methylideneamino] imidazole-4-carboxamide isomerase.